A 193-amino-acid polypeptide reads, in one-letter code: uncharacterized protein (193 aa).

Residues 1–22 (MAVQKNVIKGILAGTFALMLSG) form the signal peptide. Cys-23 carries the N-palmitoyl cysteine lipid modification. Cys-23 is lipidated: S-diacylglycerol cysteine.

The protein resides in the cell membrane. This is an uncharacterized protein from Escherichia coli (strain K12).